The chain runs to 318 residues: Transcription factor MYBS3 (318 aa).

2 disordered regions span residues 1–20 and 50–98; these read MTRR…TCPN and AAGS…PWTE. The CCHC-type zinc finger occupies 3-20; that stretch reads RRCSHCSHNGHNSRTCPN. Polar residues predominate over residues 8–18; it reads CSHNGHNSRTC. Over residues 50 to 77 the composition is skewed to low complexity; it reads AAGSTSGGASPADGPDAAPTAADGYASD. The HTH myb-type domain occupies 88-144; that stretch reads RDRKKGVPWTEEEHRRFLLGLQKLGKGDWRGISRNFVVSRTPTQVASHAQKYFIRQS. Residues 116–140 constitute a DNA-binding region (H-T-H motif); the sequence is WRGISRNFVVSRTPTQVASHAQKYF. The interval 159 to 200 is disordered; it reads VPDESMDLPPLPGGQEPETQVLNQPALPPPREEEEVDSMESD.

Expressed in all tissues, with the highest level in senescent leaves.

The protein localises to the nucleus. Functionally, transcription repressor that binds to 5'-TATCCA-3' elements in gene promoters. Contributes to the sugar-repressed transcription of promoters containing SRS or 5'-TATCCA-3' elements. Transcription repressor involved in a cold stress response pathway that confers cold tolerance. Suppresses the DREB1-dependent signaling pathway under prolonged cold stress. DREB1 responds quickly and transiently while MYBS3 responds slowly to cold stress. They may act sequentially and complementarily for adaptation to short- and long-term cold stress. In Oryza sativa subsp. japonica (Rice), this protein is Transcription factor MYBS3.